The primary structure comprises 1225 residues: DNA-directed RNA polymerase subunit beta' (1225 aa).

Zn(2+)-binding residues include Cys60, Cys62, Cys75, and Cys78. Mg(2+) is bound by residues Asp450, Asp452, and Asp454. Positions 818, 892, 899, and 902 each coordinate Zn(2+).

Belongs to the RNA polymerase beta' chain family. The RNAP catalytic core consists of 2 alpha, 1 beta, 1 beta' and 1 omega subunit. When a sigma factor is associated with the core the holoenzyme is formed, which can initiate transcription. Requires Mg(2+) as cofactor. The cofactor is Zn(2+).

It catalyses the reaction RNA(n) + a ribonucleoside 5'-triphosphate = RNA(n+1) + diphosphate. DNA-dependent RNA polymerase catalyzes the transcription of DNA into RNA using the four ribonucleoside triphosphates as substrates. The protein is DNA-directed RNA polymerase subunit beta' of Streptococcus pneumoniae (strain Hungary19A-6).